The primary structure comprises 419 residues: Carbohydrate sulfotransferase 12 (419 aa).

Residues 1–5 (MTKPR) lie on the Cytoplasmic side of the membrane. A helical; Signal-anchor for type II membrane protein transmembrane segment spans residues 6–26 (LFRLWLVLGSALMILLIIVYW). At 27–419 (DNVGTAHFYL…YPKPENLLRD (393 aa)) the chain is on the lumenal side. Residues 78 to 87 (HNDLSRRKTE) show a composition bias toward basic and acidic residues. Positions 78–99 (HNDLSRRKTEQPPVPAPSKPVL) are disordered. A glycan (N-linked (GlcNAc...) asparagine) is linked at N139. A 3'-phosphoadenylyl sulfate-binding site is contributed by 176 to 182 (PKVACTN). N214 carries N-linked (GlcNAc...) asparagine glycosylation. 3'-phosphoadenylyl sulfate is bound at residue 250–258 (RDPFVRLIS). N-linked (GlcNAc...) asparagine glycans are attached at residues N285 and N375.

The protein belongs to the sulfotransferase 2 family.

Its subcellular location is the golgi apparatus membrane. It catalyses the reaction chondroitin beta-D-glucuronate + n 3'-phosphoadenylyl sulfate = chondroitin 4'-sulfate + n adenosine 3',5'-bisphosphate + n H(+). Catalyzes the transfer of sulfate to position 4 of the N-acetylgalactosamine (GalNAc) residue of chondroitin and desulfated dermatan sulfate. Chondroitin sulfate constitutes the predominant proteoglycan present in cartilage and is distributed on the surfaces of many cells and extracellular matrices. Activity toward partially desulfated dermatan sulfate is however lower. Does not form 4, 6-di-O-sulfated GalNAc when chondroitin sulfate C is used as an acceptor. The sequence is that of Carbohydrate sulfotransferase 12 (Chst12) from Mus musculus (Mouse).